Here is a 151-residue protein sequence, read N- to C-terminus: Large ribosomal subunit protein uL13 (151 aa).

The protein belongs to the universal ribosomal protein uL13 family. As to quaternary structure, part of the 50S ribosomal subunit.

This protein is one of the early assembly proteins of the 50S ribosomal subunit, although it is not seen to bind rRNA by itself. It is important during the early stages of 50S assembly. The protein is Large ribosomal subunit protein uL13 of Synechocystis sp. (strain ATCC 27184 / PCC 6803 / Kazusa).